The sequence spans 80 residues: Acyl carrier protein (80 aa).

The Carrier domain occupies 4 to 79 (DEIFSKVRSI…DVVNFIKKRK (76 aa)). Serine 39 carries the O-(pantetheine 4'-phosphoryl)serine modification.

Belongs to the acyl carrier protein (ACP) family. In terms of processing, 4'-phosphopantetheine is transferred from CoA to a specific serine of apo-ACP by AcpS. This modification is essential for activity because fatty acids are bound in thioester linkage to the sulfhydryl of the prosthetic group.

It localises to the cytoplasm. It functions in the pathway lipid metabolism; fatty acid biosynthesis. In terms of biological role, carrier of the growing fatty acid chain in fatty acid biosynthesis. The sequence is that of Acyl carrier protein from Borreliella burgdorferi (strain ATCC 35210 / DSM 4680 / CIP 102532 / B31) (Borrelia burgdorferi).